A 131-amino-acid polypeptide reads, in one-letter code: Protein FAM107B (131 aa).

The residue at position 2 (Ala2) is an N-acetylalanine. Disordered regions lie at residues 39–78 (MNQK…KKKS) and 100–131 (KLQE…AQES). Lys50 is subject to N6-acetyllysine. The span at 52 to 78 (ELQKVMEKRRRDQVIKQKEEEAQKKKS) shows a compositional bias: basic and acidic residues. Residues 61-112 (RRDQVIKQKEEEAQKKKSDLEIELLKRQQKLEQLELEKQKLQEEQENAPEFV) are a coiled coil.

The protein belongs to the FAM107 family.

In Rattus norvegicus (Rat), this protein is Protein FAM107B.